The primary structure comprises 20 residues: Insulin-like growth factor-binding protein 2 (20 aa).

Residues 2 to 20 (LVFYCPKCTAERQTACPKL) enclose the IGFBP N-terminal domain.

Binds IGF2 more than IGF1. Post-translationally, N-glycosylated.

The protein localises to the secreted. In terms of biological role, inhibits IGF-mediated growth and developmental rates. IGF-binding proteins prolong the half-life of the IGFs and have been shown to either inhibit or stimulate the growth promoting effects of the IGFs on cell culture. They alter the interaction of IGFs with their cell surface receptors. This is Insulin-like growth factor-binding protein 2 (igfbp2) from Oncorhynchus tshawytscha (Chinook salmon).